The sequence spans 274 residues: Protein FAM210A (274 aa).

A compositionally biased stretch (polar residues) spans 51 to 66 (KWLHSQPKQQDSSTKT). The segment at 51 to 91 (KWLHSQPKQQDSSTKTPVHDLPSGSQHQSEESSPSAKSSIS) is disordered. Residues 81–91 (ESSPSAKSSIS) show a composition bias toward low complexity. One can recognise a DUF1279 domain in the interval 105–217 (DQSIGLLKRF…GYLSTPPLVK (113 aa)). Residues 124–144 (VLIPVHLVTSSFWFGSFYYAA) form a helical membrane-spanning segment. Residues 221-274 (QDRMEETKELFTEKMEETRDIISGKMEETKDRISEKLQETKDRVAFRKKKNEEM) adopt a coiled-coil conformation.

The protein belongs to the FAM210 family.

Its subcellular location is the membrane. The protein resides in the mitochondrion. The protein localises to the cytoplasm. In terms of biological role, may play a role in the structure and strength of both muscle and bone. The polypeptide is Protein FAM210A (fam210a) (Xenopus tropicalis (Western clawed frog)).